We begin with the raw amino-acid sequence, 409 residues long: MFLFSLTVLSALVLITESIPSVATDFPFFEITKKFDDIETYNNDYGILKFQEQEPMENLTCASCEAPSERECTLNQTAVVCDQDPNIACLTFEAFNNFTMTTTFRRGCFLSGILCENACRSFNASQDGNLTSCVQDCCNSSLCNAGSLPTEVTTEASTTAQETTATSTTTKQSTGASTTAEPSTTAAPSTTTKQTTVASTTATTTKPTTAPQTRATTLPTTAPTTAPAPIACGGVLRGRGTFTSPGFPGNYPNNVRCEWRVFLPRRQAIVFRIVSLDLADPGDSLEFFDSGRVIRTFRGLSRRKRSPSHRQTTNEKVLGEGEDGYYDDQEYVDYYYYDGRRKREPYFYQRRKKRRQQDRIVIQGRNQVAGAIFQSDAAGNAAGFSTQFVQGAADSESEASASSESSDED.

The signal sequence occupies residues 1 to 18 (MFLFSLTVLSALVLITES). The segment covering 154-229 (TEASTTAQET…TTAPTTAPAP (76 aa)) has biased composition (low complexity). The segment at 154-230 (TEASTTAQET…TAPTTAPAPI (77 aa)) is disordered. A disulfide bridge connects residues Cys232 and Cys257. Residues 232-338 (CGGVLRGRGT…QEYVDYYYYD (107 aa)) form the CUB domain. Residues 389 to 409 (VQGAADSESEASASSESSDED) are disordered. Over residues 392 to 409 (AADSESEASASSESSDED) the composition is skewed to low complexity.

In terms of tissue distribution, component of the acid-insoluble and acid-soluble organic matrix of the aragonitic skeleton (at protein level).

The protein resides in the secreted. The chain is CUB domain-containing protein from Acropora millepora (Staghorn coral).